We begin with the raw amino-acid sequence, 288 residues long: UDP-3-O-acyl-N-acetylglucosamine deacetylase (288 aa).

Positions 79, 236, and 240 each coordinate Zn(2+). His-263 acts as the Proton donor in catalysis.

This sequence belongs to the LpxC family. Zn(2+) serves as cofactor.

The enzyme catalyses a UDP-3-O-[(3R)-3-hydroxyacyl]-N-acetyl-alpha-D-glucosamine + H2O = a UDP-3-O-[(3R)-3-hydroxyacyl]-alpha-D-glucosamine + acetate. It participates in glycolipid biosynthesis; lipid IV(A) biosynthesis; lipid IV(A) from (3R)-3-hydroxytetradecanoyl-[acyl-carrier-protein] and UDP-N-acetyl-alpha-D-glucosamine: step 2/6. Functionally, catalyzes the hydrolysis of UDP-3-O-myristoyl-N-acetylglucosamine to form UDP-3-O-myristoylglucosamine and acetate, the committed step in lipid A biosynthesis. The polypeptide is UDP-3-O-acyl-N-acetylglucosamine deacetylase (Rickettsia africae (strain ESF-5)).